Consider the following 434-residue polypeptide: MFS-type transporter pynF (434 aa).

Positions 1–13 are enriched in basic and acidic residues; sequence MSHDQRSPSEEVS. The segment at 1–34 is disordered; it reads MSHDQRSPSEEVSRTALSKPASESTIVGDGHHPL. The next 12 helical transmembrane spans lie at 44–64, 84–104, 109–129, 138–158, 171–191, 203–223, 249–269, 280–302, 311–331, 334–354, 375–395, and 402–422; these read WLVV…LNAF, IAWI…VVGP, VGAT…LMLT, LILA…YPTI, IALG…TEII, TVRA…VLII, LLFS…FFYL, VTGA…VLTG, FNVI…LHKI, SGAI…LISL, LMMG…GALL, and WYGF…VTIL.

Belongs to the major facilitator superfamily. Monocarboxylate porter (TC 2.A.1.13) family.

It is found in the cell membrane. Its function is as follows. MFS-type transporter; part of the gene cluster that mediates the biosynthesis of pyranonigrins, a family of antioxidative compounds. May be involved in the secretion of pyranonigrins. This Aspergillus niger (strain ATCC MYA-4892 / CBS 513.88 / FGSC A1513) protein is MFS-type transporter pynF.